Reading from the N-terminus, the 153-residue chain is Calmodulin-like protein 4 (153 aa).

EF-hand domains are found at residues Asp-8–Ser-43, Pro-44–Gln-79, Asp-81–Lys-116, and Leu-117–Asp-152.

The protein belongs to the calmodulin family. In terms of assembly, interacts with MYO7B; the interaction mediates the association of CALML4 with the IMAC/intermicrovillar adhesion complex. Interacts with MYO7A.

Its subcellular location is the cell projection. It is found in the microvillus. Functionally, as part of the intermicrovillar adhesion complex/IMAC plays a role in epithelial brush border differentiation, controlling microvilli organization and length. Acts as a light chain for MYO7B and is required for efficient targeting of the IMAC to the tips of border brush microvilli. This chain is Calmodulin-like protein 4 (CALML4), found in Bos taurus (Bovine).